The primary structure comprises 556 residues: Glucose-6-phosphate isomerase (556 aa).

Glu360 serves as the catalytic Proton donor. Catalysis depends on residues His391 and Lys519.

The protein belongs to the GPI family.

Its subcellular location is the cytoplasm. It catalyses the reaction alpha-D-glucose 6-phosphate = beta-D-fructose 6-phosphate. It participates in carbohydrate biosynthesis; gluconeogenesis. The protein operates within carbohydrate degradation; glycolysis; D-glyceraldehyde 3-phosphate and glycerone phosphate from D-glucose: step 2/4. Functionally, catalyzes the reversible isomerization of glucose-6-phosphate to fructose-6-phosphate. The chain is Glucose-6-phosphate isomerase from Acinetobacter baumannii (strain ATCC 17978 / DSM 105126 / CIP 53.77 / LMG 1025 / NCDC KC755 / 5377).